Reading from the N-terminus, the 778-residue chain is Serine/threonine-protein kinase BRSK1 (778 aa).

Residues 1 to 12 are compositionally biased toward gly residues; that stretch reads MSSGSKEGGGGS. Positions 1-29 are disordered; the sequence is MSSGSKEGGGGSPAYHLPHPHPHPPQHAQ. Residues 34–285 enclose the Protein kinase domain; the sequence is YRLEKTLGKG…LEQIQKHPWY (252 aa). ATP is bound by residues 40 to 48 and lysine 63; that span reads LGKGQTGLV. Aspartate 156 serves as the catalytic Proton acceptor. Phosphothreonine; by LKB1 is present on threonine 189. Serine 193 bears the Phosphoserine mark. The UBA domain maps to 314-356; that stretch reads ELDPDVLESMASLGCFRDRERLHRELRSEEENQEKMIYYLLLD. The span at 362-383 shows a compositional bias: basic and acidic residues; the sequence is PSCEDQDLPPRNDVDPPRKRVD. Residues 362-548 form a disordered region; that stretch reads PSCEDQDLPP…SPGGGVGGAA (187 aa). Residues serine 399, serine 443, serine 447, and serine 450 each carry the phosphoserine modification. Over residues 430–457 the composition is skewed to low complexity; that stretch reads SRSVSGASTGLSSSPLSSPRSPVFSFSP. Omega-N-methylarginine is present on residues arginine 466, arginine 481, arginine 484, and arginine 498. A compositionally biased stretch (pro residues) spans 491 to 508; it reads QPPPPSARSTPLPGPPGS. Serine 508 carries the phosphoserine modification. The span at 509 to 533 shows a compositional bias: low complexity; it reads PRSSGGTPLHSPLHTPRASPTGTPG. The residue at position 525 (arginine 525) is an Omega-N-methylarginine. 2 positions are modified to phosphothreonine: threonine 529 and threonine 535. Arginine 550 is modified (omega-N-methylarginine). The residue at position 583 (threonine 583) is a Phosphothreonine. Phosphoserine occurs at positions 586, 587, and 601. Residues 719–778 form a disordered region; that stretch reads QPSVQALADEKNGAQTRPAGTPPRSLQPPPGRPDPDLSSSPRRGPSKDKKLLATNGTPLP.

It belongs to the protein kinase superfamily. CAMK Ser/Thr protein kinase family. SNF1 subfamily. It depends on Mg(2+) as a cofactor. Phosphorylated at Thr-189 by STK11/LKB1 in complex with STE20-related adapter-alpha (STRADA) pseudo kinase and CAB39. Not phosphorylated at Thr-189 by CaMKK2. In contrast, it is phosphorylated and activated by CaMKK1. May be inactivated via dephosphorylation of Thr-189 by PP2C. May be autophosphorylated. Mainly present in brain. Present in presynaptic nerve terminals (at protein level).

It is found in the cytoplasm. The protein localises to the nucleus. It localises to the cytoskeleton. Its subcellular location is the microtubule organizing center. The protein resides in the centrosome. It is found in the synapse. The protein localises to the presynaptic active zone. It localises to the cytoplasmic vesicle. Its subcellular location is the secretory vesicle. The protein resides in the synaptic vesicle. It catalyses the reaction L-seryl-[protein] + ATP = O-phospho-L-seryl-[protein] + ADP + H(+). The catalysed reaction is L-threonyl-[protein] + ATP = O-phospho-L-threonyl-[protein] + ADP + H(+). It carries out the reaction L-seryl-[tau protein] + ATP = O-phospho-L-seryl-[tau protein] + ADP + H(+). The enzyme catalyses L-threonyl-[tau protein] + ATP = O-phospho-L-threonyl-[tau protein] + ADP + H(+). With respect to regulation, activated by phosphorylation on Thr-189 by STK11/LKB1. Serine/threonine-protein kinase that plays a key role in polarization of neurons and centrosome duplication. Phosphorylates CDC25B, CDC25C, MAPT/TAU, RIMS1, TUBG1, TUBG2 and WEE1. Following phosphorylation and activation by STK11/LKB1, acts as a key regulator of polarization of cortical neurons, probably by mediating phosphorylation of microtubule-associated proteins such as MAPT/TAU at 'Thr-523' and 'Ser-573'. Also regulates neuron polarization by mediating phosphorylation of WEE1 at 'Ser-642' in postmitotic neurons, leading to down-regulate WEE1 activity in polarized neurons. Also acts as a positive regulator of centrosome duplication by mediating phosphorylation of gamma-tubulin (TUBG1 and TUBG2) at 'Ser-131', leading to translocation of gamma-tubulin and its associated proteins to the centrosome. Involved in the UV-induced DNA damage checkpoint response, probably by inhibiting CDK1 activity through phosphorylation and activation of WEE1, and inhibition of CDC25B and CDC25C. In neurons, localizes to synaptic vesicles and plays a role in neurotransmitter release, possibly by phosphorylating RIMS1. The chain is Serine/threonine-protein kinase BRSK1 (Brsk1) from Rattus norvegicus (Rat).